We begin with the raw amino-acid sequence, 1158 residues long: Formin-C (1158 aa).

Disordered regions lie at residues 8–29, 417–523, and 990–1052; these read INGN…PSVS, PNTS…LSCL, and INNN…NNSQ. A GBD/FH3 domain is found at 20–388; the sequence is QQPQQNPSVS…EYSQRKLEMI (369 aa). Positions 417–437 are enriched in polar residues; that stretch reads PNTSDLFDSSTLEDTYDGNND. Low complexity predominate over residues 438–481; sequence TNSCTSISTSSTPIHISQPTTLIVPSTTPNHPPQQSQQTPPLQL. Residues 479 to 515 are a coiled coil; the sequence is LQLQKEKEKEKEKEKEKEKEKEKEQQQQQQQSNKQST. Residues 482–503 are compositionally biased toward basic and acidic residues; the sequence is QKEKEKEKEKEKEKEKEKEKEQ. The region spanning 601-998 is the FH2 domain; sequence TKSPITPSKR…IINNNNNNNN (398 aa). In terms of domain architecture, DAD spans 1134–1158; it reads SDDPMAVIIEALKTGSPNDMVKRAF.

Belongs to the formin homology family. Diaphanous subfamily. As to quaternary structure, interacts (via GBD/FH3 domain) with activated Rho-GTPases.

It localises to the cytoplasm. The protein localises to the cytosol. It is found in the cytoskeleton. Its function is as follows. Formins play an important role in the nucleation of actin and the formation of linear actin filaments. The protein is Formin-C (forC) of Dictyostelium discoideum (Social amoeba).